Consider the following 374-residue polypeptide: Eukaryotic translation initiation factor 3 subunit M (374 aa).

The 160-residue stretch at 180-339 folds into the PCI domain; it reads TAAKVMVELL…RKVVVSHSTH (160 aa).

Belongs to the eIF-3 subunit M family. As to quaternary structure, component of the eukaryotic translation initiation factor 3 (eIF-3) complex, which is composed of 13 subunits: EIF3A, EIF3B, EIF3C, EIF3D, EIF3E, EIF3F, EIF3G, EIF3H, EIF3I, EIF3J, EIF3K, EIF3L and EIF3M.

The protein resides in the cytoplasm. Component of the eukaryotic translation initiation factor 3 (eIF-3) complex, which is involved in protein synthesis of a specialized repertoire of mRNAs and, together with other initiation factors, stimulates binding of mRNA and methionyl-tRNAi to the 40S ribosome. The eIF-3 complex specifically targets and initiates translation of a subset of mRNAs involved in cell proliferation. The sequence is that of Eukaryotic translation initiation factor 3 subunit M from Gallus gallus (Chicken).